A 640-amino-acid polypeptide reads, in one-letter code: Pleckstrin homology-like domain family B member 3 (640 aa).

Disordered stretches follow at residues 1-100 (MGTR…AARR), 162-189 (LEQQ…ERDR), 241-262 (LERE…VPDP), 387-412 (GLQR…RPLS), and 476-504 (REGT…PHPP). The segment covering 76 to 90 (PPIAMAATPPASTSS) has biased composition (low complexity). A coiled-coil region spans residues 104 to 327 (QQLEALTRVA…ERSRLLELNC (224 aa)). Over residues 170–189 (QRGRQQREQEQRRLSQERDR) the composition is skewed to basic and acidic residues. The stretch at 454–481 (DIAHMERLLQQAMAERERLLKAREGTRR) forms a coiled coil. Residues 495–504 (TAPPTPPHPP) are compositionally biased toward pro residues. The PH domain occupies 532 to 635 (GCCCRGPLVK…WMDVIVTAAD (104 aa)).

The chain is Pleckstrin homology-like domain family B member 3 (PHLDB3) from Homo sapiens (Human).